We begin with the raw amino-acid sequence, 224 residues long: 7-cyano-7-deazaguanine synthase (224 aa).

7-17 (LSGGLDSSTIL) is an ATP binding site. Cysteine 191, cysteine 199, cysteine 202, and cysteine 205 together coordinate Zn(2+).

The protein belongs to the QueC family. Zn(2+) is required as a cofactor.

The catalysed reaction is 7-carboxy-7-deazaguanine + NH4(+) + ATP = 7-cyano-7-deazaguanine + ADP + phosphate + H2O + H(+). It participates in purine metabolism; 7-cyano-7-deazaguanine biosynthesis. Catalyzes the ATP-dependent conversion of 7-carboxy-7-deazaguanine (CDG) to 7-cyano-7-deazaguanine (preQ(0)). The polypeptide is 7-cyano-7-deazaguanine synthase (Nostoc punctiforme (strain ATCC 29133 / PCC 73102)).